The sequence spans 417 residues: NADH-quinone oxidoreductase subunit D (417 aa).

This sequence belongs to the complex I 49 kDa subunit family. In terms of assembly, NDH-1 is composed of 14 different subunits. Subunits NuoB, C, D, E, F, and G constitute the peripheral sector of the complex.

The protein resides in the cell inner membrane. The enzyme catalyses a quinone + NADH + 5 H(+)(in) = a quinol + NAD(+) + 4 H(+)(out). NDH-1 shuttles electrons from NADH, via FMN and iron-sulfur (Fe-S) centers, to quinones in the respiratory chain. The immediate electron acceptor for the enzyme in this species is believed to be ubiquinone. Couples the redox reaction to proton translocation (for every two electrons transferred, four hydrogen ions are translocated across the cytoplasmic membrane), and thus conserves the redox energy in a proton gradient. The sequence is that of NADH-quinone oxidoreductase subunit D from Cupriavidus metallidurans (strain ATCC 43123 / DSM 2839 / NBRC 102507 / CH34) (Ralstonia metallidurans).